A 158-amino-acid chain; its full sequence is NAD(P)H-quinone oxidoreductase subunit N (158 aa).

The protein belongs to the complex I NdhN subunit family. NDH-1 can be composed of about 15 different subunits; different subcomplexes with different compositions have been identified which probably have different functions.

It is found in the cellular thylakoid membrane. It catalyses the reaction a plastoquinone + NADH + (n+1) H(+)(in) = a plastoquinol + NAD(+) + n H(+)(out). It carries out the reaction a plastoquinone + NADPH + (n+1) H(+)(in) = a plastoquinol + NADP(+) + n H(+)(out). In terms of biological role, NDH-1 shuttles electrons from an unknown electron donor, via FMN and iron-sulfur (Fe-S) centers, to quinones in the respiratory and/or the photosynthetic chain. The immediate electron acceptor for the enzyme in this species is believed to be plastoquinone. Couples the redox reaction to proton translocation, and thus conserves the redox energy in a proton gradient. Cyanobacterial NDH-1 also plays a role in inorganic carbon-concentration. The protein is NAD(P)H-quinone oxidoreductase subunit N of Cyanothece sp. (strain PCC 7425 / ATCC 29141).